The chain runs to 106 residues: UPF0060 membrane protein Rleg2_1018 (106 aa).

The next 4 membrane-spanning stretches (helical) occupy residues isoleucine 4 to leucine 24, valine 30 to valine 50, threonine 58 to glutamate 78, and aspartate 86 to glycine 106.

The protein belongs to the UPF0060 family.

The protein localises to the cell inner membrane. This is UPF0060 membrane protein Rleg2_1018 from Rhizobium leguminosarum bv. trifolii (strain WSM2304).